A 219-amino-acid polypeptide reads, in one-letter code: Large ribosomal subunit protein uL1 (219 aa).

It belongs to the universal ribosomal protein uL1 family. Component of the large ribosomal subunit.

It is found in the cytoplasm. This is Large ribosomal subunit protein uL1 (RPL1) from Encephalitozoon cuniculi (strain GB-M1) (Microsporidian parasite).